The sequence spans 140 residues: Large-conductance mechanosensitive channel (140 aa).

Transmembrane regions (helical) follow at residues 16–36 (VIDL…VTAL) and 84–104 (INTV…VKLI).

Belongs to the MscL family. As to quaternary structure, homopentamer.

It is found in the cell inner membrane. Channel that opens in response to stretch forces in the membrane lipid bilayer. May participate in the regulation of osmotic pressure changes within the cell. The protein is Large-conductance mechanosensitive channel of Xanthomonas oryzae pv. oryzae (strain MAFF 311018).